Consider the following 340-residue polypeptide: Pilin (340 aa).

A signal peptide spans 1–23 (MKLRHLLLTGAALTSFAATTVHG). Cross-links (isoaspartyl lysine isopeptide (Lys-Asn)) lie at residues 36 to 168 (KNLD…QFKN) and 179 to 303 (KKVS…TFTN). Lys-161 participates in a covalent cross-link: Threonyl lysine isopeptide (Lys-Thr) (interchain with T-311). The short motif at 308–312 (EVPTG) is the EVPTG sorting signal element. Thr-311 bears the Pentaglycyl murein peptidoglycan amidated threonine; alternate mark. Thr-311 participates in a covalent cross-link: Threonyl lysine isopeptide (Thr-Lys) (interchain with K-161); alternate. Residues 312–340 (GVAMTVAPYIALGIVAVGGALYFVKKKNA) constitute a propeptide, removed by sortase C1.

It belongs to the Streptococcus pilin family. Forms columns of about 3-nanometers in diameter of head-to-tail-assembled molecules. Proteolytically processed and assembled in pili through a transpeptidation reaction catalyzed by the sortase C1. The last pilin subunit is cross-linked to the peptidoglycan.

The protein resides in the secreted. It localises to the cell wall. The protein localises to the fimbrium. Its function is as follows. Major component of the pilus. A stack of the pilin subunits, joined by intermolecular isopeptide bonds, forms the pilus. The pilus is required for bacterial adhesion to host cells, for bacterial aggregation, and for biofilm formation. The chain is Pilin from Streptococcus pyogenes serotype M1.